The chain runs to 358 residues: MAATLGSGERWTEAYIDAVRRNKYPEDTPPESHDPCGCCNCMKAQKEKKSENEWTQTRQGEGNSTYSEEQLLGVQRIKKCRNYYEILGVSRDASDEELKKAYRKLALKFHPDKNCAPGATDAFKAIGNAFAVLSNPDKRLRYDEYGDEQVTFTAPRARPYNYYRDFEADITPEELFNVFFGGHFPTGNIHMFSNVTDDTYYYRRRHRHERTQTQKEEEEEKPQTTYSAFIQLLPVLVIVIISVITQLLATNPPYSLFYKSTLGYTISRETQNLQVPYFVDKNFDKAYRGASLHDLEKTIEKDYIDYIQTSCWKEKQQKSELTNLAGLYRDERLKQKAESLKLENCEKLSKLIGLRRGG.

Residues 82–146 enclose the J domain; sequence NYYEILGVSR…DKRLRYDEYG (65 aa). The helical transmembrane segment at 228–248 threads the bilayer; sequence AFIQLLPVLVIVIISVITQLL.

Its subcellular location is the endoplasmic reticulum membrane. (Microbial infection) In case of infection by polyomavirus, involved in the virus endoplasmic reticulum membrane penetration and infection. Regulates the recruitment of DNAJB12:DNAJB14 into SV40-induced foci and all cooperate to guide SV40 across the endoplasmic reticulum membrane. The foci represent the site from which SV40 penetrates into the cytosol. This is DnaJ homolog subfamily C member 18 from Homo sapiens (Human).